The chain runs to 466 residues: GTPase Der (466 aa).

2 consecutive EngA-type G domains span residues 3 to 167 and 176 to 350; these read PTLV…PDEP and PKIA…GAAM. Residues 9-16, 56-60, 119-122, 182-189, 229-233, and 294-297 contribute to the GTP site; these read GRSNVGKS, DTGGF, NKTE, GRPNVGKS, DTAGL, and NKWD. Residues 351–435 enclose the KH-like domain; the sequence is AHLPTPRLTR…PLRIEFRTGR (85 aa). A disordered region spans residues 433 to 466; that stretch reads TGRNPYAGKSPAPLTEAEAKRAHRRRRYGRKKYG. The segment covering 453 to 466 has biased composition (basic residues); that stretch reads RAHRRRRYGRKKYG.

The protein belongs to the TRAFAC class TrmE-Era-EngA-EngB-Septin-like GTPase superfamily. EngA (Der) GTPase family. As to quaternary structure, associates with the 50S ribosomal subunit.

In terms of biological role, GTPase that plays an essential role in the late steps of ribosome biogenesis. The sequence is that of GTPase Der from Nitrosospira multiformis (strain ATCC 25196 / NCIMB 11849 / C 71).